Reading from the N-terminus, the 349-residue chain is Inositol-tetrakisphosphate 1-kinase 2 (349 aa).

Lys-48 and Lys-90 together coordinate 1D-myo-inositol 1,3,4-trisphosphate. Arg-125 and Lys-175 together coordinate ATP. 1D-myo-inositol 1,3,4-trisphosphate is bound by residues His-186 and Lys-218. ATP is bound by residues 207 to 218 (QEFVNHGGILFK) and Ser-233. The Mg(2+) site is built by Asp-298, Asp-313, and Asn-315. A 1D-myo-inositol 1,3,4-trisphosphate-binding site is contributed by Asn-315.

Belongs to the ITPK1 family. Monomer. Requires Mg(2+) as cofactor.

The catalysed reaction is 1D-myo-inositol 3,4,5,6-tetrakisphosphate + ATP = 1D-myo-inositol 1,3,4,5,6-pentakisphosphate + ADP + H(+). It catalyses the reaction 1D-myo-inositol 1,3,4-trisphosphate + ATP = 1D-myo-inositol 1,3,4,5-tetrakisphosphate + ADP + H(+). It carries out the reaction 1D-myo-inositol 1,3,4-trisphosphate + ATP = 1D-myo-inositol 1,3,4,6-tetrakisphosphate + ADP + H(+). Functionally, kinase that can phosphorylate various inositol polyphosphate such as Ins(3,4,5,6)P4 or Ins(1,3,4)P3 and participates in phytic acid biosynthesis in developing seeds. Phytic acid is the primary storage form of phosphorus in cereal grains and other plant seeds. The protein is Inositol-tetrakisphosphate 1-kinase 2 (ITPK2) of Oryza sativa subsp. indica (Rice).